A 973-amino-acid polypeptide reads, in one-letter code: NLR family member X1 (973 aa).

Residues 1-84 (MRWGCHLPRT…EAIQRHRRNL (84 aa)) constitute a mitochondrion transit peptide. The tract at residues 73–554 (ATEAIQRHRR…RILPLLFNLL (482 aa)) is required for interaction with MAVS. An NACHT domain is found at 158 to 481 (QTVVLYGTVG…LRFFLAPCVE (324 aa)). 164-171 (GTVGTGKS) serves as a coordination point for ATP. The segment at 554 to 972 (LKVVPRVFGR…TLLEQLGGSG (419 aa)) is required for the repression of MAVS-induced interferon signaling. The 28-residue stretch at 665–692 (RQVLPPSELLDHLFFHYEFQNQRFSAEV) folds into the LRRNT domain. 8 LRR repeats span residues 693–716 (LGSL…VVAS), 722–745 (RHPL…TLMP), 747–775 (LLRA…LLHD), 776–799 (QCQI…VLMD), 809–832 (HLSL…LDRN), 833–855 (KQLQ…ALAK), 856–875 (AARK…ELSS), and 876–897 (EGRQ…VVAS). The region spanning 904 to 968 (VSEYWSVILS…SEVKTLLEQL (65 aa)) is the LRRCT domain.

The protein belongs to the NLRP family. In terms of assembly, homohexamer. Interacts with MAVS. Interacts with TUFM.

Its subcellular location is the mitochondrion outer membrane. In terms of biological role, participates in antiviral signaling. Acts as a negative regulator of MAVS-mediated antiviral responses, through the inhibition of the virus-induced RLH (RIG-like helicase)-MAVS interaction. Instead, promotes autophagy by interacting with TUFM and subsequently recruiting the autophagy-related proteins ATG5 and ATG12. Also regulates MAVS-dependent NLRP3 inflammasome activation to attenuate apoptosis. Has no inhibitory function on NF-kappa-B signaling pathway, but enhances NF-kappa-B and JUN N-terminal kinase dependent signaling through the production of reactive oxygen species. Regulates viral mediated-inflammation and energy metabolism in a sex-dependent manner. In females, prevents uncontrolled inflammation and energy metabolism and thus, may contribute to the sex differences observed in infectious and inflammatory diseases. This Rattus norvegicus (Rat) protein is NLR family member X1 (Nlrx1).